Consider the following 682-residue polypeptide: Iron-phytosiderophore transporter yellow stripe 1 (682 aa).

A disordered region spans residues 1–36 (MDLARRGGAAGADDEGEIERHEPAPEDMESDPAAAR). The next 15 helical transmembrane spans lie at 56–76 (GVVA…KIAL), 79–99 (GLVP…LRGW), 124–144 (CAVA…LLGL), 167–187 (GFGW…LSLI), 236–256 (LSFV…CGFV), 288–308 (LVNI…WPLI), 334–354 (FLCI…VFGV), 396–416 (FPAW…AVII), 428–448 (VIVA…GTGL), 460–480 (IALF…AGLA), 514–534 (VAQF…FLLF), 549–569 (APYG…FSVL), 574–594 (LALS…RDVL), 612–632 (FLVG…VFVW), and 640–660 (AVFM…IWTF).

The protein belongs to the YSL (TC 2.A.67.2) family. In terms of tissue distribution, expressed in roots of young maize seedlings. Not detected in leaves of iron-sufficient plants, but accumulates in roots and leaves of iron-deficient plants.

It localises to the membrane. In terms of biological role, involved in Fe(3+) uptake. Acts as a proton-coupled symporter for phytosiderophore- and nicotianamine-chelated metals. Capable of transporting either Fe(2+)-nicotianamine or Fe(3+)-phytosiderophore. May transport iron, zinc, nickel, copper and, at a lower rate, manganese and cadmium. The chain is Iron-phytosiderophore transporter yellow stripe 1 (YS1) from Zea mays (Maize).